The following is a 388-amino-acid chain: Succinate--CoA ligase [ADP-forming] subunit beta (388 aa).

The 236-residue stretch at 9-244 (KEILRKYGVT…LDEEDPAEIE (236 aa)) folds into the ATP-grasp domain. ATP is bound by residues lysine 46, 53–55 (GRG), glutamate 99, alanine 102, and glutamate 107. Positions 199 and 213 each coordinate Mg(2+). Substrate contacts are provided by residues asparagine 264 and 321–323 (GIM).

It belongs to the succinate/malate CoA ligase beta subunit family. Heterotetramer of two alpha and two beta subunits. It depends on Mg(2+) as a cofactor.

It catalyses the reaction succinate + ATP + CoA = succinyl-CoA + ADP + phosphate. The enzyme catalyses GTP + succinate + CoA = succinyl-CoA + GDP + phosphate. Its pathway is carbohydrate metabolism; tricarboxylic acid cycle; succinate from succinyl-CoA (ligase route): step 1/1. Its function is as follows. Succinyl-CoA synthetase functions in the citric acid cycle (TCA), coupling the hydrolysis of succinyl-CoA to the synthesis of either ATP or GTP and thus represents the only step of substrate-level phosphorylation in the TCA. The beta subunit provides nucleotide specificity of the enzyme and binds the substrate succinate, while the binding sites for coenzyme A and phosphate are found in the alpha subunit. The sequence is that of Succinate--CoA ligase [ADP-forming] subunit beta from Janthinobacterium sp. (strain Marseille) (Minibacterium massiliensis).